Reading from the N-terminus, the 351-residue chain is Transmembrane protein 255A (351 aa).

4 consecutive transmembrane segments (helical) span residues 30 to 50 (IYVT…GLAA), 57 to 77 (VTVG…LGII), 89 to 109 (LVAS…CAIV), and 226 to 246 (TILN…LGGF). The disordered stretch occupies residues 302–331 (FPSSPPSGLSDEQEPQSPSPSPSYMWSSSA).

It belongs to the TMEM255 family.

The protein localises to the membrane. In Rattus norvegicus (Rat), this protein is Transmembrane protein 255A (Tmem255a).